A 386-amino-acid polypeptide reads, in one-letter code: Caspase-1-A (386 aa).

Positions 1–100 (MTAQLNKVRR…PPMAPVPIQE (100 aa)) are excised as a propeptide. A CARD domain is found at 22–88 (SDLLDDLREK…HKTLAKSLGL (67 aa)). Catalysis depends on residues His218 and Cys274. The propeptide occupies 287–296 (DVASPPLEDD).

Belongs to the peptidase C14A family. Heterotetramer that consists of two anti-parallel arranged heterodimers, each one formed by a 20 kDa (Caspase-1 subunit p20) and a 10 kDa (Caspase-1 subunit p10) subunit. In terms of assembly, heterotetramer that consists of two anti-parallel arranged heterodimers, each one formed by a 20 kDa (Caspase-1 subunit p20) and a 10 kDa (Caspase-1 subunit p10) subunit. Can form a heterodimer with isoform epsilon which then has an inhibitory effect. Post-translationally, the two subunits are derived from the precursor sequence by an autocatalytic mechanism.

It localises to the cytoplasm. The protein localises to the cell membrane. It carries out the reaction Strict requirement for an Asp residue at position P1 and has a preferred cleavage sequence of Tyr-Val-Ala-Asp-|-.. Its function is as follows. Thiol protease involved in a variety of inflammatory processes by proteolytically cleaving other proteins, such as the precursors of the inflammatory cytokines interleukin-1 beta (IL1B) and interleukin 18 (IL18) as well as the pyroptosis inducer Gasdermin-D (GSDMD), into active mature peptides. Plays a key role in cell immunity as an inflammatory response initiator: once activated through formation of an inflammasome complex, it initiates a pro-inflammatory response through the cleavage of the two inflammatory cytokines IL1B and IL18, releasing the mature cytokines which are involved in a variety of inflammatory processes. Cleaves a tetrapeptide after an Asp residue at position P1. Also initiates pyroptosis, a programmed lytic cell death pathway, through cleavage of GSDMD. The chain is Caspase-1-A (casp1-a) from Xenopus laevis (African clawed frog).